The primary structure comprises 270 residues: Eukaryotic translation initiation factor 3 subunit G-1 (270 aa).

The 79-residue stretch at 189 to 267 folds into the RRM domain; that stretch reads AAIRISNLSE…LILSVEWSKP (79 aa).

Belongs to the eIF-3 subunit G family. Component of the eukaryotic translation initiation factor 3 (eIF-3) complex. The eIF-3 complex interacts with pix.

It localises to the cytoplasm. RNA-binding component of the eukaryotic translation initiation factor 3 (eIF-3) complex, which is involved in protein synthesis of a specialized repertoire of mRNAs and, together with other initiation factors, stimulates binding of mRNA and methionyl-tRNAi to the 40S ribosome. The eIF-3 complex specifically targets and initiates translation of a subset of mRNAs involved in cell proliferation. This subunit can bind 18S rRNA. The chain is Eukaryotic translation initiation factor 3 subunit G-1 from Drosophila ananassae (Fruit fly).